The primary structure comprises 141 residues: Hemoglobin subunit alpha (141 aa).

The Globin domain maps to 1–141; it reads VLSAADKTNV…VATVLTSKYR (141 aa). A Phosphoserine modification is found at Ser3. Position 7 is an N6-succinyllysine (Lys7). Thr8 is subject to Phosphothreonine. Lys11 carries the post-translational modification N6-succinyllysine. An N6-acetyllysine; alternate modification is found at Lys16. Lys16 is subject to N6-succinyllysine; alternate. A Phosphotyrosine modification is found at Tyr24. Ser35 is subject to Phosphoserine. Lys40 carries the post-translational modification N6-succinyllysine. Position 49 is a phosphoserine (Ser49). His58 lines the O2 pocket. His87 serves as a coordination point for heme b. Ser102 carries the phosphoserine modification. Thr108 bears the Phosphothreonine mark. Ser124 bears the Phosphoserine mark. Phosphothreonine occurs at positions 134 and 137. The residue at position 138 (Ser138) is a Phosphoserine.

The protein belongs to the globin family. As to quaternary structure, heterotetramer of two alpha chains and two beta chains. As to expression, red blood cells.

Functionally, involved in oxygen transport from the lung to the various peripheral tissues. Hemopressin acts as an antagonist peptide of the cannabinoid receptor CNR1. Hemopressin-binding efficiently blocks cannabinoid receptor CNR1 and subsequent signaling. The polypeptide is Hemoglobin subunit alpha (HBA) (Ctenodactylus gundi (Northern gundi)).